Here is a 368-residue protein sequence, read N- to C-terminus: Probable dual-specificity RNA methyltransferase RlmN (368 aa).

Residue Glu111 is the Proton acceptor of the active site. Residues 117–355 form the Radical SAM core domain; the sequence is YPNRATLCIS…CTVRDTRGQE (239 aa). A disulfide bridge connects residues Cys124 and Cys360. Residues Cys131, Cys135, and Cys138 each coordinate [4Fe-4S] cluster. S-adenosyl-L-methionine is bound by residues 181–182, Ser215, 238–240, and Asn317; these read GE and SLH. Residue Cys360 is the S-methylcysteine intermediate of the active site.

The protein belongs to the radical SAM superfamily. RlmN family. The cofactor is [4Fe-4S] cluster.

Its subcellular location is the cytoplasm. It catalyses the reaction adenosine(2503) in 23S rRNA + 2 reduced [2Fe-2S]-[ferredoxin] + 2 S-adenosyl-L-methionine = 2-methyladenosine(2503) in 23S rRNA + 5'-deoxyadenosine + L-methionine + 2 oxidized [2Fe-2S]-[ferredoxin] + S-adenosyl-L-homocysteine. The enzyme catalyses adenosine(37) in tRNA + 2 reduced [2Fe-2S]-[ferredoxin] + 2 S-adenosyl-L-methionine = 2-methyladenosine(37) in tRNA + 5'-deoxyadenosine + L-methionine + 2 oxidized [2Fe-2S]-[ferredoxin] + S-adenosyl-L-homocysteine. Its function is as follows. Specifically methylates position 2 of adenine 2503 in 23S rRNA and position 2 of adenine 37 in tRNAs. This is Probable dual-specificity RNA methyltransferase RlmN from Corynebacterium diphtheriae (strain ATCC 700971 / NCTC 13129 / Biotype gravis).